Consider the following 494-residue polypeptide: PIGF/3-ketodihydrosphingosine reductase fusion protein (494 aa).

NADPH-binding residues include Gly-20, Ser-22, and Gly-24. The short motif at 20–24 (GGSQG) is the GXSXG element. Position 25 (Leu-25) interacts with NADP(+). The NADPH site is built by Arg-45 and Lys-49. Val-54 is a binding site for NADP(+). Asp-74 and Leu-75 together coordinate NADPH. The chain crosses the membrane as a helical span at residues 148-168 (ILLVGSLLSSLPIIGYSAYSP). Tyr-166, Lys-170, and Ile-199 together coordinate NADP(+). Catalysis depends on Tyr-166, which acts as the Proton acceptor. Lys-170 acts as the Lowers pKa of active site Tyr in catalysis. The next 6 helical transmembrane spans lie at 264–284 (HDNP…WPFY), 312–332 (IFTL…LNCL), 370–390 (LAGA…LVAF), 402–422 (YFCA…TLAF), 444–464 (LRSW…PLDW), and 473–493 (ITIV…GEIL).

It in the N-terminal section; belongs to the short-chain dehydrogenases/reductases (SDR) family. In the C-terminal section; belongs to the PIGF family.

Its subcellular location is the endoplasmic reticulum membrane. It catalyses the reaction sphinganine + NADP(+) = 3-oxosphinganine + NADPH + H(+). Its pathway is glycolipid biosynthesis; glycosylphosphatidylinositol-anchor biosynthesis. It functions in the pathway lipid metabolism; sphingolipid metabolism. Its function is as follows. Acts in the GPI biosynthetic pathway between GlcNAc-PI synthesis and GPI transfer to protein. Required for the formation of complete GPI precursors CP1 and CP2. Catalyzes the reduction of 3'-oxosphinganine (3-ketodihydrosphingosine/KDS) to sphinganine (dihydrosphingosine/DHS), the second step of de novo sphingolipid biosynthesis. This chain is PIGF/3-ketodihydrosphingosine reductase fusion protein, found in Schizosaccharomyces pombe (strain 972 / ATCC 24843) (Fission yeast).